Here is a 284-residue protein sequence, read N- to C-terminus: MAFRPRKRFGQHWLNHEPTLQAIVAAADIQSGAPQSGSLRDRLLEIGPGMGVLTKQLLATGNPVVAVELDRDLCLKLRKKLGQRENFLLLEGDVLILDLNALLQDFPQFSPLNKVVANIPYNITSPILELLLGTIQKPRVPGFETIVLLVQKEIAERLTAQPSTKAYGALSVRMQYLARVDWIVDVPPKAFTPPPKVDSAVIRLTPYPVEQLPGDRRLLDQLLCLGFANRRKMLRNNLKGLIAPEQLTTLLEQLALPSTARAEDLSLEQWLELTNLLPTFLPPT.

S-adenosyl-L-methionine-binding residues include histidine 12, leucine 14, glycine 47, glutamate 68, aspartate 93, and asparagine 118.

It belongs to the class I-like SAM-binding methyltransferase superfamily. rRNA adenine N(6)-methyltransferase family. RsmA subfamily.

It localises to the cytoplasm. It catalyses the reaction adenosine(1518)/adenosine(1519) in 16S rRNA + 4 S-adenosyl-L-methionine = N(6)-dimethyladenosine(1518)/N(6)-dimethyladenosine(1519) in 16S rRNA + 4 S-adenosyl-L-homocysteine + 4 H(+). In terms of biological role, specifically dimethylates two adjacent adenosines (A1518 and A1519) in the loop of a conserved hairpin near the 3'-end of 16S rRNA in the 30S particle. May play a critical role in biogenesis of 30S subunits. This Synechocystis sp. (strain ATCC 27184 / PCC 6803 / Kazusa) protein is Ribosomal RNA small subunit methyltransferase A.